Here is a 302-residue protein sequence, read N- to C-terminus: RNA polymerase II holoenzyme cyclin-like subunit (302 aa).

A Cyclin N-terminal domain is found at glutamine 53 to serine 142.

It belongs to the cyclin family. Cyclin C subfamily. Component of the srb8-11 complex, a regulatory module of the Mediator complex.

It is found in the nucleus. Its function is as follows. Component of the srb8-11 complex. The srb8-11 complex is a regulatory module of the Mediator complex which is itself involved in regulation of basal and activated RNA polymerase II-dependent transcription. The srb8-11 complex may be involved in the transcriptional repression of a subset of genes regulated by Mediator. It may inhibit the association of the Mediator complex with RNA polymerase II to form the holoenzyme complex. The srb8-11 complex phosphorylates the C-terminal domain (CTD) of the largest subunit of RNA polymerase II. The protein is RNA polymerase II holoenzyme cyclin-like subunit (ssn8) of Aspergillus fumigatus (strain ATCC MYA-4609 / CBS 101355 / FGSC A1100 / Af293) (Neosartorya fumigata).